The following is a 1471-amino-acid chain: Gag-Pol polyprotein (1471 aa).

A lipid anchor (N-myristoyl glycine; by host) is attached at glycine 2. Positions 7 to 31 are interaction with Gp41; that stretch reads VLSGKKTDELEKVRLRPGGKKRYCL. The Nuclear export signal signature appears at 16 to 22; sequence LEKVRLR. A Nuclear localization signal motif is present at residues 26–32; it reads KKRYCLK. A compositionally biased stretch (basic and acidic residues) spans 105-114; that stretch reads QRHLAADTEK. Positions 105-130 are disordered; sequence QRHLAADTEKMPATSRPTAPPSGGNY. Phosphotyrosine; by host is present on tyrosine 130. Residues 186 to 223 are interaction with human PPIA/CYPA and NUP153; sequence NCVGDHQAAMQIIREIINEEAADWDQQHPIPGPLPAGQ. The tract at residues 274–360 is dimerization/Multimerization of capsid protein p24; that stretch reads YNPTNILDIK…GGPGQKARLM (87 aa). 2 consecutive CCHC-type zinc fingers follow at residues 388 to 405 and 409 to 426; these read VTCWNCGKVGHTAKQCRA and QGCWKCGKQGHIMSKCPE. Residues 441 to 508 form a disordered region; it reads ASQLPHDPSA…PRETLQGGDR (68 aa). The span at 484 to 501 shows a compositional bias: basic and acidic residues; that stretch reads DAEKLHEDGETAEREPRE. The segment at 513–517 is dimerization of protease; it reads PQFSL. The Peptidase A2 domain maps to 533 to 602; it reads EVLLDTGADD…PINIFGRNIL (70 aa). Aspartate 537 serves as the catalytic For protease activity; shared with dimeric partner. Dimerization of protease regions lie at residues 561–567 and 600–612; these read GIGGFIN and NILNTLGMTLNFP. A Reverse transcriptase domain is found at 656-846; it reads GQLEEAPPTN…PFKWMGYELW (191 aa). Mg(2+)-binding residues include aspartate 721, aspartate 796, and aspartate 797. The segment at 838–846 is RT 'primer grip'; it reads FKWMGYELW. A Tryptophan repeat motif motif is present at residues 1008 to 1024; that stretch reads WDQWWTDYWQVTWIPEW. The 124-residue stretch at 1044 to 1167 folds into the RNase H type-1 domain; sequence LEKVETYYTD…VDHLVSQGIR (124 aa). 4 residues coordinate Mg(2+): aspartate 1053, glutamate 1088, aspartate 1108, and aspartate 1159. Residues 1173 to 1214 form an Integrase-type zinc finger; that stretch reads EKIEPAQEEHEKYHGNVKELVHKFGLPQLVAKQIVNSCDKCQ. 4 residues coordinate Zn(2+): histidine 1182, histidine 1186, cysteine 1210, and cysteine 1213. The Integrase catalytic domain occupies 1224-1375; that stretch reads VNAELGTWQM…PAERLVNMIT (152 aa). Mg(2+) is bound by residues aspartate 1234, aspartate 1286, and glutamate 1322. Positions 1393–1440 form a DNA-binding region, integrase-type; it reads FQVYYREGRDQLWKGPGELLWKGEGAVLIKVGTEIKVIPRRKAKIIRH.

Homotrimer; further assembles as hexamers of trimers. Interacts with gp41 (via C-terminus). Interacts with host CALM1; this interaction induces a conformational change in the Matrix protein, triggering exposure of the myristate group. Interacts with host AP3D1; this interaction allows the polyprotein trafficking to multivesicular bodies during virus assembly. Part of the pre-integration complex (PIC) which is composed of viral genome, matrix protein, Vpr and integrase. In terms of assembly, homodimer; the homodimer further multimerizes as homohexamers or homopentamers. Interacts with human PPIA/CYPA. Interacts with human NUP153. Interacts with host PDZD8; this interaction stabilizes the capsid. Interacts with monkey TRIM5; this interaction destabilizes the capsid. As to quaternary structure, homodimer, whose active site consists of two apposed aspartic acid residues. Heterodimer of p66 RT and p51 RT (RT p66/p51). Heterodimerization of RT is essential for DNA polymerase activity. The overall folding of the subdomains is similar in p66 RT and p51 RT but the spatial arrangements of the subdomains are dramatically different. In terms of assembly, homotetramer; may further associate as a homohexadecamer. Part of the pre-integration complex (PIC) which is composed of viral genome, matrix protein, Vpr and integrase. Interacts with human SMARCB1/INI1 and human PSIP1/LEDGF isoform 1. Interacts with human KPNA3; this interaction might play a role in nuclear import of the pre-integration complex. Interacts with human NUP153; this interaction might play a role in nuclear import of the pre-integration complex. It depends on Mg(2+) as a cofactor. Post-translationally, specific enzymatic cleavages by the viral protease yield mature proteins. The protease is released by autocatalytic cleavage. The polyprotein is cleaved during and after budding, this process is termed maturation. Proteolytic cleavage of p66 RT removes the RNase H domain to yield the p51 RT subunit. Nucleocapsid protein p7 might be further cleaved after virus entry.

Its subcellular location is the host cell membrane. It is found in the host endosome. The protein localises to the host multivesicular body. It localises to the virion membrane. The protein resides in the host nucleus. Its subcellular location is the host cytoplasm. It is found in the virion. It carries out the reaction Endopeptidase for which the P1 residue is preferably hydrophobic.. The catalysed reaction is Endohydrolysis of RNA in RNA/DNA hybrids. Three different cleavage modes: 1. sequence-specific internal cleavage of RNA. Human immunodeficiency virus type 1 and Moloney murine leukemia virus enzymes prefer to cleave the RNA strand one nucleotide away from the RNA-DNA junction. 2. RNA 5'-end directed cleavage 13-19 nucleotides from the RNA end. 3. DNA 3'-end directed cleavage 15-20 nucleotides away from the primer terminus.. The enzyme catalyses 3'-end directed exonucleolytic cleavage of viral RNA-DNA hybrid.. It catalyses the reaction DNA(n) + a 2'-deoxyribonucleoside 5'-triphosphate = DNA(n+1) + diphosphate. Protease: The viral protease is inhibited by many synthetic protease inhibitors (PIs), such as amprenavir, atazanavir, indinavir, loprinavir, nelfinavir, ritonavir and saquinavir. Use of protease inhibitors in tritherapy regimens permit more ambitious therapeutic strategies. Reverse transcriptase/ribonuclease H: RT can be inhibited either by nucleoside RT inhibitors (NRTIs) or by non nucleoside RT inhibitors (NNRTIs). NRTIs act as chain terminators, whereas NNRTIs inhibit DNA polymerization by binding a small hydrophobic pocket near the RT active site and inducing an allosteric change in this region. Classical NRTIs are abacavir, adefovir (PMEA), didanosine (ddI), lamivudine (3TC), stavudine (d4T), tenofovir (PMPA), zalcitabine (ddC), and zidovudine (AZT). Classical NNRTIs are atevirdine (BHAP U-87201E), delavirdine, efavirenz (DMP-266), emivirine (I-EBU), and nevirapine (BI-RG-587). The tritherapies used as a basic effective treatment of AIDS associate two NRTIs and one NNRTI. Mediates, with Gag polyprotein, the essential events in virion assembly, including binding the plasma membrane, making the protein-protein interactions necessary to create spherical particles, recruiting the viral Env proteins, and packaging the genomic RNA via direct interactions with the RNA packaging sequence (Psi). Gag-Pol polyprotein may regulate its own translation, by the binding genomic RNA in the 5'-UTR. At low concentration, the polyprotein would promote translation, whereas at high concentration, the polyprotein would encapsidate genomic RNA and then shut off translation. In terms of biological role, targets the polyprotein to the plasma membrane via a multipartite membrane-binding signal, that includes its myristoylated N-terminus. Matrix protein is part of the pre-integration complex. Implicated in the release from host cell mediated by Vpu. Binds to RNA. Functionally, forms the conical core that encapsulates the genomic RNA-nucleocapsid complex in the virion. Most core are conical, with only 7% tubular. The core is constituted by capsid protein hexamer subunits. The core is disassembled soon after virion entry. Host restriction factors such as TRIM5-alpha or TRIMCyp bind retroviral capsids and cause premature capsid disassembly, leading to blocks in reverse transcription. Capsid restriction by TRIM5 is one of the factors which restricts HIV-1 to the human species. Host PIN1 apparently facilitates the virion uncoating. On the other hand, interactions with PDZD8 or CYPA stabilize the capsid. Its function is as follows. Encapsulates and protects viral dimeric unspliced genomic RNA (gRNA). Binds these RNAs through its zinc fingers. Acts as a nucleic acid chaperone which is involved in rearangement of nucleic acid secondary structure during gRNA retrotranscription. Also facilitates template switch leading to recombination. As part of the polyprotein, participates in gRNA dimerization, packaging, tRNA incorporation and virion assembly. Aspartyl protease that mediates proteolytic cleavages of Gag and Gag-Pol polyproteins during or shortly after the release of the virion from the plasma membrane. Cleavages take place as an ordered, step-wise cascade to yield mature proteins. This process is called maturation. Displays maximal activity during the budding process just prior to particle release from the cell. Also cleaves Nef and Vif, probably concomitantly with viral structural proteins on maturation of virus particles. Hydrolyzes host EIF4GI and PABP1 in order to shut off the capped cellular mRNA translation. The resulting inhibition of cellular protein synthesis serves to ensure maximal viral gene expression and to evade host immune response. In terms of biological role, multifunctional enzyme that converts the viral RNA genome into dsDNA in the cytoplasm, shortly after virus entry into the cell. This enzyme displays a DNA polymerase activity that can copy either DNA or RNA templates, and a ribonuclease H (RNase H) activity that cleaves the RNA strand of RNA-DNA heteroduplexes in a partially processive 3' to 5' endonucleasic mode. Conversion of viral genomic RNA into dsDNA requires many steps. A tRNA(3)-Lys binds to the primer-binding site (PBS) situated at the 5'-end of the viral RNA. RT uses the 3' end of the tRNA primer to perform a short round of RNA-dependent minus-strand DNA synthesis. The reading proceeds through the U5 region and ends after the repeated (R) region which is present at both ends of viral RNA. The portion of the RNA-DNA heteroduplex is digested by the RNase H, resulting in a ssDNA product attached to the tRNA primer. This ssDNA/tRNA hybridizes with the identical R region situated at the 3' end of viral RNA. This template exchange, known as minus-strand DNA strong stop transfer, can be either intra- or intermolecular. RT uses the 3' end of this newly synthesized short ssDNA to perform the RNA-dependent minus-strand DNA synthesis of the whole template. RNase H digests the RNA template except for two polypurine tracts (PPTs) situated at the 5'-end and near the center of the genome. It is not clear if both polymerase and RNase H activities are simultaneous. RNase H probably can proceed both in a polymerase-dependent (RNA cut into small fragments by the same RT performing DNA synthesis) and a polymerase-independent mode (cleavage of remaining RNA fragments by free RTs). Secondly, RT performs DNA-directed plus-strand DNA synthesis using the PPTs that have not been removed by RNase H as primers. PPTs and tRNA primers are then removed by RNase H. The 3' and 5' ssDNA PBS regions hybridize to form a circular dsDNA intermediate. Strand displacement synthesis by RT to the PBS and PPT ends produces a blunt ended, linear dsDNA copy of the viral genome that includes long terminal repeats (LTRs) at both ends. Functionally, catalyzes viral DNA integration into the host chromosome, by performing a series of DNA cutting and joining reactions. This enzyme activity takes place after virion entry into a cell and reverse transcription of the RNA genome in dsDNA. The first step in the integration process is 3' processing. This step requires a complex comprising the viral genome, matrix protein, Vpr and integrase. This complex is called the pre-integration complex (PIC). The integrase protein removes 2 nucleotides from each 3' end of the viral DNA, leaving recessed CA OH's at the 3' ends. In the second step, the PIC enters cell nucleus. This process is mediated through integrase and Vpr proteins, and allows the virus to infect a non dividing cell. This ability to enter the nucleus is specific of lentiviruses, other retroviruses cannot and rely on cell division to access cell chromosomes. In the third step, termed strand transfer, the integrase protein joins the previously processed 3' ends to the 5' ends of strands of target cellular DNA at the site of integration. The 5'-ends are produced by integrase-catalyzed staggered cuts, 5 bp apart. A Y-shaped, gapped, recombination intermediate results, with the 5'-ends of the viral DNA strands and the 3' ends of target DNA strands remaining unjoined, flanking a gap of 5 bp. The last step is viral DNA integration into host chromosome. This involves host DNA repair synthesis in which the 5 bp gaps between the unjoined strands are filled in and then ligated. Since this process occurs at both cuts flanking the HIV genome, a 5 bp duplication of host DNA is produced at the ends of HIV-1 integration. Alternatively, Integrase may catalyze the excision of viral DNA just after strand transfer, this is termed disintegration. In Human immunodeficiency virus type 2 subtype B (isolate UC1) (HIV-2), this protein is Gag-Pol polyprotein (gag-pol).